Here is a 459-residue protein sequence, read N- to C-terminus: V-type ATP synthase beta chain (459 aa).

The protein belongs to the ATPase alpha/beta chains family.

Produces ATP from ADP in the presence of a proton gradient across the membrane. The V-type beta chain is a regulatory subunit. The polypeptide is V-type ATP synthase beta chain (Thermoanaerobacter pseudethanolicus (strain ATCC 33223 / 39E) (Clostridium thermohydrosulfuricum)).